The chain runs to 237 residues: Oligoribonuclease, mitochondrial (237 aa).

The N-terminal 25 residues, 1-25, are a transit peptide targeting the mitochondrion; that stretch reads MLGVSLGARLLRGVGGRRGQFGARG. The 165-residue stretch at 43 to 207 folds into the Exonuclease domain; the sequence is MVWVDLEMTG…DDISESIKEL (165 aa). The Mg(2+) site is built by Asp47 and Glu49. Ser92 carries the phosphoserine modification. Position 122 is a phosphotyrosine (Tyr122). Asp147 contacts Mg(2+). Residue Lys173 is modified to N6-acetyllysine. The active site involves His194. Asp199 serves as a coordination point for Mg(2+).

The protein belongs to the oligoribonuclease family. As to quaternary structure, homodimer. Homotetramer. Mn(2+) is required as a cofactor. The cofactor is Mg(2+).

It localises to the mitochondrion intermembrane space. The protein localises to the mitochondrion matrix. It is found in the mitochondrion. The protein resides in the cytoplasm. Its subcellular location is the nucleus. Functionally, 3'-to-5'exoribonuclease that preferentially degrades DNA and RNA oligonucleotides composed of only two nucleotides. Binds and degrades longer oligonucleotides with a lower affinity. Plays dual roles in mitochondria, scavenging nanoRNAs (small RNA oligonucleotides of &lt;5 nucleotides) that are produced by the degradosome and clearing short RNAs that are generated by RNA processing. Essential for correct initiation of mitochondrial transcription, degrading mitochondrial RNA dinucleotides to prevent RNA-primed transcription at non-canonical sites in the mitochondrial genome. Essential for embryonic development. The sequence is that of Oligoribonuclease, mitochondrial (Rexo2) from Mus musculus (Mouse).